A 464-amino-acid polypeptide reads, in one-letter code: ATP synthase subunit beta 2 (464 aa).

147 to 154 (GGAGVGKT) contacts ATP.

The protein belongs to the ATPase alpha/beta chains family. In terms of assembly, F-type ATPases have 2 components, CF(1) - the catalytic core - and CF(0) - the membrane proton channel. CF(1) has five subunits: alpha(3), beta(3), gamma(1), delta(1), epsilon(1). CF(0) has four main subunits: a(1), b(1), b'(1) and c(9-12).

Its subcellular location is the cell inner membrane. The catalysed reaction is ATP + H2O + 4 H(+)(in) = ADP + phosphate + 5 H(+)(out). In terms of biological role, produces ATP from ADP in the presence of a proton gradient across the membrane. The catalytic sites are hosted primarily by the beta subunits. In Cereibacter sphaeroides (strain ATCC 17029 / ATH 2.4.9) (Rhodobacter sphaeroides), this protein is ATP synthase subunit beta 2.